The following is a 359-amino-acid chain: Fructose-bisphosphate aldolase (359 aa).

Residue serine 61 coordinates D-glyceraldehyde 3-phosphate. The active-site Proton donor is aspartate 109. 4 residues coordinate Zn(2+): histidine 110, aspartate 144, glutamate 174, and histidine 226. Glycine 227 provides a ligand contact to dihydroxyacetone phosphate. Residue histidine 265 coordinates Zn(2+). Residues 266-268 (GGS) and 287-290 (NIDT) contribute to the dihydroxyacetone phosphate site.

This sequence belongs to the class II fructose-bisphosphate aldolase family. The cofactor is Zn(2+).

It carries out the reaction beta-D-fructose 1,6-bisphosphate = D-glyceraldehyde 3-phosphate + dihydroxyacetone phosphate. The protein operates within carbohydrate degradation; glycolysis; D-glyceraldehyde 3-phosphate and glycerone phosphate from D-glucose: step 4/4. Functionally, catalyzes the aldol condensation of dihydroxyacetone phosphate (DHAP or glycerone-phosphate) with glyceraldehyde 3-phosphate (G3P) to form fructose 1,6-bisphosphate (FBP) in gluconeogenesis and the reverse reaction in glycolysis. In Borreliella burgdorferi (strain ATCC 35210 / DSM 4680 / CIP 102532 / B31) (Borrelia burgdorferi), this protein is Fructose-bisphosphate aldolase (fba).